The chain runs to 248 residues: uncharacterized protein (248 aa).

The protein belongs to the glycosyltransferase 2 family.

This is an uncharacterized protein from Acanthamoeba polyphaga (Amoeba).